An 88-amino-acid polypeptide reads, in one-letter code: Large ribosomal subunit protein bL27 (88 aa).

The segment at 1–23 is disordered; the sequence is MAHKKAGGSSRNGRDSAGRRLGV.

The protein belongs to the bacterial ribosomal protein bL27 family.

The chain is Large ribosomal subunit protein bL27 from Methylorubrum populi (strain ATCC BAA-705 / NCIMB 13946 / BJ001) (Methylobacterium populi).